A 932-amino-acid chain; its full sequence is Isoleucine--tRNA ligase (932 aa).

The 'HIGH' region signature appears at Pro-57–His-67. Glu-552 provides a ligand contact to L-isoleucyl-5'-AMP. The 'KMSKS' region signature appears at Lys-593–Ser-597. An ATP-binding site is contributed by Lys-596. Residues Cys-889, Cys-892, Cys-911, and Cys-914 each contribute to the Zn(2+) site.

It belongs to the class-I aminoacyl-tRNA synthetase family. IleS type 1 subfamily. As to quaternary structure, monomer. The cofactor is Zn(2+).

It localises to the cytoplasm. The catalysed reaction is tRNA(Ile) + L-isoleucine + ATP = L-isoleucyl-tRNA(Ile) + AMP + diphosphate. Functionally, catalyzes the attachment of isoleucine to tRNA(Ile). As IleRS can inadvertently accommodate and process structurally similar amino acids such as valine, to avoid such errors it has two additional distinct tRNA(Ile)-dependent editing activities. One activity is designated as 'pretransfer' editing and involves the hydrolysis of activated Val-AMP. The other activity is designated 'posttransfer' editing and involves deacylation of mischarged Val-tRNA(Ile). This chain is Isoleucine--tRNA ligase, found in Lactococcus lactis subsp. lactis (strain IL1403) (Streptococcus lactis).